A 596-amino-acid chain; its full sequence is Pescadillo homolog (596 aa).

Positions 347-440 (PTSTLFSEFV…ELVPANLYLP (94 aa)) constitute a BRCT domain. The segment at 449–552 (SPWGDSVGYD…EEKDLKLIMM (104 aa)) is disordered. A coiled-coil region spans residues 460–596 (AAELAEEEAE…TKAKLKKLEN (137 aa)). Acidic residues predominate over residues 463–500 (LAEEEAESEEEEEVSDEAEGDEEATLAAEEDEEDEAEA). The segment covering 501–510 (EELRAQKELE) has biased composition (basic and acidic residues). Residues 519-529 (SEAADSAAPSK) are compositionally biased toward low complexity.

The protein belongs to the pescadillo family. In terms of assembly, component of the NOP7 complex, composed of ERB1, NOP7 and YTM1. The complex is held together by ERB1, which interacts with NOP7 via its N-terminal domain and with YTM1 via a high-affinity interaction between the seven-bladed beta-propeller domains of the 2 proteins. The NOP7 complex associates with the 66S pre-ribosome.

It localises to the nucleus. It is found in the nucleolus. The protein resides in the nucleoplasm. In terms of biological role, component of the NOP7 complex, which is required for maturation of the 25S and 5.8S ribosomal RNAs and formation of the 60S ribosome. The sequence is that of Pescadillo homolog from Eremothecium gossypii (strain ATCC 10895 / CBS 109.51 / FGSC 9923 / NRRL Y-1056) (Yeast).